The primary structure comprises 158 residues: RNA pyrophosphohydrolase (158 aa).

Residues G6–Q150 form the Nudix hydrolase domain. The Nudix box signature appears at G39–G60.

Belongs to the Nudix hydrolase family. RppH subfamily. The cofactor is a divalent metal cation.

Functionally, accelerates the degradation of transcripts by removing pyrophosphate from the 5'-end of triphosphorylated RNA, leading to a more labile monophosphorylated state that can stimulate subsequent ribonuclease cleavage. The sequence is that of RNA pyrophosphohydrolase from Blochmanniella pennsylvanica (strain BPEN).